We begin with the raw amino-acid sequence, 247 residues long: Uridylate kinase (247 aa).

17–20 (KFSG) contributes to the ATP binding site. Position 59 (Gly-59) interacts with UMP. ATP is bound by residues Gly-60 and Arg-64. UMP is bound by residues Asp-79 and 140–147 (TGNPFFTT). 3 residues coordinate ATP: Thr-167, Tyr-173, and Asp-176.

The protein belongs to the UMP kinase family. Homohexamer.

It is found in the cytoplasm. It carries out the reaction UMP + ATP = UDP + ADP. The protein operates within pyrimidine metabolism; CTP biosynthesis via de novo pathway; UDP from UMP (UMPK route): step 1/1. With respect to regulation, inhibited by UTP. Functionally, catalyzes the reversible phosphorylation of UMP to UDP. The polypeptide is Uridylate kinase (Legionella pneumophila subsp. pneumophila (strain Philadelphia 1 / ATCC 33152 / DSM 7513)).